The chain runs to 159 residues: MSFRIGHGYDVHKFTSAKQNIIIGGVEIAYHLGLEAHSDGDVLIHALCDAILGALGLGDIGKHFLDTDNQFKNIDSKFFLAEIKKMLDEKQYSISNIDCTIIAQAPKMLPHIEKMRACLANILEIQISQINIKATTTERLGFIGREEGIATHVVCLLYR.

The a divalent metal cation site is built by aspartate 10 and histidine 12. Residues 10-12 (DVH) and 37-38 (HS) each bind 4-CDP-2-C-methyl-D-erythritol 2-phosphate. A divalent metal cation is bound at residue histidine 45. 4-CDP-2-C-methyl-D-erythritol 2-phosphate-binding positions include 59 to 61 (DIG), 64 to 68 (FLDTD), 103 to 109 (AQAPKML), 135 to 138 (TTTE), phenylalanine 142, and arginine 145.

It belongs to the IspF family. In terms of assembly, homotrimer. A divalent metal cation is required as a cofactor.

The catalysed reaction is 4-CDP-2-C-methyl-D-erythritol 2-phosphate = 2-C-methyl-D-erythritol 2,4-cyclic diphosphate + CMP. It participates in isoprenoid biosynthesis; isopentenyl diphosphate biosynthesis via DXP pathway; isopentenyl diphosphate from 1-deoxy-D-xylulose 5-phosphate: step 4/6. Its function is as follows. Involved in the biosynthesis of isopentenyl diphosphate (IPP) and dimethylallyl diphosphate (DMAPP), two major building blocks of isoprenoid compounds. Catalyzes the conversion of 4-diphosphocytidyl-2-C-methyl-D-erythritol 2-phosphate (CDP-ME2P) to 2-C-methyl-D-erythritol 2,4-cyclodiphosphate (ME-CPP) with a corresponding release of cytidine 5-monophosphate (CMP). The sequence is that of 2-C-methyl-D-erythritol 2,4-cyclodiphosphate synthase from Francisella tularensis subsp. holarctica (strain FTNF002-00 / FTA).